The sequence spans 875 residues: MSGTKPDILWAPHHVDRFVVCDSELSLYHVESTVNSELKAGSLRLSEDSAATLLSINSDTPYMKCVAWYLNYDPECLLAVGQANGRVVLTSLGQDHNSKFKDLIGKEFVPKHARQCNTLAWNPLDSNWLAAGLDKHRADFSVLIWDICSKYTPDIVPMEKVKLSAGETETTLLVTKPLYELGQNDACLSLCWLPRDQKLLLAGMHRNLAIFDLRNTSQKMFVNTKAVQGVTVDPYFHDRVASFYEGQVAIWDLRKFEKPVLTLTEQPKPLTKVAWCPTRTGLLATLTRDSNIIRLYDMQHTPTPIGDETEPTIIERSVQPCDNYIASFAWHPTSQNRMIVVTPNRTMSDFTVFERISLAWSPITSLMWACGRHLYECTEEENDNSLEKDIATKMRLRALSRYGLDTEQVWRNHILAGNEDPQLKSLWYTLHFMKQYTEDMDQKSPGNKGSLVYAGIKSIVKSSLGMVESSRHNWSGLDKQSDIQNLNEERILALQLCGWIKKGTDVDVGPFLNSLVQEGEWERAAAVALFNLDIRRAIQILNEGASSEKGDLNLNVVAMALSGYTDEKNSLWREMCSTLRLQLNNPYLCVMFAFLTSETGSYDGVLYENKVAVRDRVAFACKFLSDTQLNRYIEKLTNEMKEAGNLEGILLTGLTKDGVDLMESYVDRTGDVQTASYCMLQGSPLDVLKDERVQYWIENYRNLLDAWRFWHKRAEFDIHRSKLDPSSKPLAQVFVSCNFCGKSISYSCSAVPHQGRGFSQYGVSGSPTKSKVTSCPGCRKPLPRCALCLINMGTPVSSCPGGTKSDEKVDLSKDKKLAQFNNWFTWCHNCRHGGHAGHMLSWFRDHAECPVSACTCKCMQLDTTGNLVPAETVQP.

WD repeat units lie at residues 58 to 100 (SDTP…NSKF), 111 to 155 (KHAR…TPDI), 182 to 221 (GQND…QKMF), 223 to 261 (NTKA…KPVL), 265 to 306 (EQPK…TPIG), and 395 to 437 (RLRA…KQYT). The C4-type zinc finger occupies 735 to 781 (VSCNFCGKSISYSCSAVPHQGRGFSQYGVSGSPTKSKVTSCPGCRKP). Positions 737 and 740 each coordinate Zn(2+). Phosphoserine is present on residues serine 759 and serine 766. Cysteine 775, cysteine 778, cysteine 788, cysteine 827, cysteine 830, histidine 832, histidine 835, histidine 838, cysteine 849, cysteine 854, and cysteine 858 together coordinate Zn(2+). The segment at 782-863 (LPRCALCLIN…CTCKCMQLDT (82 aa)) adopts an RING-type; atypical zinc-finger fold.

Belongs to the WD repeat mio family. Component of the GATOR2 subcomplex, composed of MIOS, SEC13, SEH1L, WDR24 and WDR59. The GATOR2 complex interacts with CASTOR1 and CASTOR2; the interaction is negatively regulated by arginine. CASTOR1 and CASTOR2 convey leucine availability via direct interaction with MIOS. The GATOR2 complex interacts with SESN1, SESN2 and SESN3; the interaction is negatively regulated by amino acids. Interacts with SAR1A and SAR1B; the interaction is direct, disrupted by leucine and mediates the interaction of SAR1A or SAR1B with the GATOR2 complex to negatively regulate the TORC1 signaling upon leucine deprivation.

The protein resides in the lysosome membrane. The GATOR2 complex is negatively regulated by the upstream amino acid sensors CASTOR1 and SESN2, which sequester the GATOR2 complex in absence of amino acids. In the presence of abundant amino acids, GATOR2 is released from CASTOR1 and SESN2 and activated. Functionally, as a component of the GATOR2 complex, functions as an activator of the amino acid-sensing branch of the mTORC1 signaling pathway. The GATOR2 complex indirectly activates mTORC1 through the inhibition of the GATOR1 subcomplex. GATOR2 probably acts as an E3 ubiquitin-protein ligase toward GATOR1. In the presence of abundant amino acids, the GATOR2 complex mediates ubiquitination of the NPRL2 core component of the GATOR1 complex, leading to GATOR1 inactivation. In the absence of amino acids, GATOR2 is inhibited, activating the GATOR1 complex. Within the GATOR2 complex, MIOS is required to prevent autoubiquitination of WDR24, the catalytic subunit of the complex. The GATOR2 complex is required for brain myelination. In Homo sapiens (Human), this protein is GATOR2 complex protein MIOS.